Reading from the N-terminus, the 295-residue chain is Small ribosomal subunit protein uS2 (295 aa).

Ser2 carries the post-translational modification N-acetylserine. Ser43 is subject to Phosphoserine. Lys52 carries the N6-acetyllysine modification. Positions 54–113 are interaction with PPP1R16B; sequence TWEKLLLAARAIVAIENPADVSVISSRNTGQRAVLKFAAATGATPIAGRFTPGTFTNQIQ. N6-acetyllysine; alternate is present on Lys89. A Glycyl lysine isopeptide (Lys-Gly) (interchain with G-Cter in SUMO2); alternate cross-link involves residue Lys89. Position 97 is a phosphothreonine (Thr97). Laminin-binding stretches follow at residues 161–180 and 205–229; these read IPCN…MLAR and RDPE…EFQG. [DE]-W-[ST] repeat units follow at residues 230–232, 247–249, 266–268, 275–277, and 293–295; these read EWT, DWS, and EWS. The laminin-binding stretch occupies residues 242–295; it reads QPEVADWSEGVQVPSVPIQQFPTEDWSAQPATEDWSAAPTAQATEWVGTTTEWS. Positions 266–295 are disordered; the sequence is DWSAQPATEDWSAAPTAQATEWVGTTTEWS. Residues 280–295 show a composition bias toward polar residues; the sequence is PTAQATEWVGTTTEWS.

Belongs to the universal ribosomal protein uS2 family. In terms of assembly, monomer (37LRP) and homodimer (67LR). Component of the small ribosomal subunit. Mature ribosomes consist of a small (40S) and a large (60S) subunit. The 40S subunit contains about 33 different proteins and 1 molecule of RNA (18S). The 60S subunit contains about 49 different proteins and 3 molecules of RNA (28S, 5.8S and 5S). Interacts with RPS21. Interacts with several laminins including at least LAMB1. Interacts with MDK. The mature dimeric form interacts with PPP1R16B (via its fourth ankyrin repeat). Interacts with PPP1CA only in the presence of PPP1R16B. Acylated. Acylation may be a prerequisite for conversion of the monomeric 37 kDa laminin receptor precursor (37LRP) to the mature dimeric 67 kDa laminin receptor (67LR), and may provide a mechanism for membrane association. In terms of processing, cleaved by stromelysin-3 (ST3) at the cell surface. Cleavage by stromelysin-3 may be a mechanism to alter cell-extracellular matrix interactions.

It is found in the cell membrane. The protein resides in the cytoplasm. It localises to the nucleus. In terms of biological role, required for the assembly and/or stability of the 40S ribosomal subunit. Required for the processing of the 20S rRNA-precursor to mature 18S rRNA in a late step of the maturation of 40S ribosomal subunits. Also functions as a cell surface receptor for laminin. Plays a role in cell adhesion to the basement membrane and in the consequent activation of signaling transduction pathways. May play a role in cell fate determination and tissue morphogenesis. Also acts as a receptor for several other ligands, including the pathogenic prion protein, viruses, and bacteria. Acts as a PPP1R16B-dependent substrate of PPP1CA. The sequence is that of Small ribosomal subunit protein uS2 from Oryctolagus cuniculus (Rabbit).